We begin with the raw amino-acid sequence, 154 residues long: 3-hydroxyacyl-[acyl-carrier-protein] dehydratase FabZ (154 aa).

Histidine 54 is an active-site residue.

It belongs to the thioester dehydratase family. FabZ subfamily.

It is found in the cytoplasm. The catalysed reaction is a (3R)-hydroxyacyl-[ACP] = a (2E)-enoyl-[ACP] + H2O. Its function is as follows. Involved in unsaturated fatty acids biosynthesis. Catalyzes the dehydration of short chain beta-hydroxyacyl-ACPs and long chain saturated and unsaturated beta-hydroxyacyl-ACPs. This is 3-hydroxyacyl-[acyl-carrier-protein] dehydratase FabZ from Shewanella baltica (strain OS223).